The following is a 953-amino-acid chain: Serine/threonine-protein kinase ppk30 (953 aa).

The 270-residue stretch at 57–326 (VIIQRYLSEG…IYQTLKEIME (270 aa)) folds into the Protein kinase domain. ATP contacts are provided by residues 63-71 (LSEGGFSHV) and K85. D187 acts as the Proton acceptor in catalysis. Disordered stretches follow at residues 343-402 (ASTY…PSVS), 427-451 (SPIP…RRAD), 538-606 (RFLP…NRMN), 641-669 (RKEP…NKDV), 748-791 (STSQ…RPIG), and 864-953 (RKSC…ESLE). Composition is skewed to polar residues over residues 355-369 (RTPS…SRPA), 378-402 (TVQT…PSVS), and 433-444 (KSYSATIQTPRS). Residues 547–557 (PSEFSSSVGSK) are compositionally biased toward low complexity. Positions 558–575 (QNLSMDIPSVQNVSTKQK) are enriched in polar residues. Over residues 656 to 669 (LKKDQSSEVANKDV) the composition is skewed to basic and acidic residues. Polar residues predominate over residues 748–766 (STSQVSHTQRLQQSISTSL). 3 stretches are compositionally biased toward basic and acidic residues: residues 767–778 (ERVKSNTKKESN), 865–884 (KSCE…DLER), and 937–953 (PHIE…ESLE). S872 and S875 each carry phosphoserine.

This sequence belongs to the protein kinase superfamily. Ser/Thr protein kinase family.

Its subcellular location is the cytoplasm. It catalyses the reaction L-seryl-[protein] + ATP = O-phospho-L-seryl-[protein] + ADP + H(+). It carries out the reaction L-threonyl-[protein] + ATP = O-phospho-L-threonyl-[protein] + ADP + H(+). In Schizosaccharomyces pombe (strain 972 / ATCC 24843) (Fission yeast), this protein is Serine/threonine-protein kinase ppk30 (ppk30).